A 78-amino-acid polypeptide reads, in one-letter code: Colicin-V immunity protein (78 aa).

Its function is as follows. This protein is able to protect a cell, which harbors the plasmid ColV encoding colicin V, against colicin V. This is Colicin-V immunity protein (cvi) from Escherichia coli.